We begin with the raw amino-acid sequence, 131 residues long: Holo-[acyl-carrier-protein] synthase (131 aa).

2 residues coordinate Mg(2+): Asp8 and Glu62.

It belongs to the P-Pant transferase superfamily. AcpS family. Requires Mg(2+) as cofactor.

It is found in the cytoplasm. It catalyses the reaction apo-[ACP] + CoA = holo-[ACP] + adenosine 3',5'-bisphosphate + H(+). Its function is as follows. Transfers the 4'-phosphopantetheine moiety from coenzyme A to a Ser of acyl-carrier-protein. The chain is Holo-[acyl-carrier-protein] synthase from Delftia acidovorans (strain DSM 14801 / SPH-1).